Consider the following 135-residue polypeptide: Large ribosomal subunit protein eL32 (135 aa).

A Glycyl lysine isopeptide (Lys-Gly) (interchain with G-Cter in SUMO2) cross-link involves residue Lys-9. Lys-50 bears the N6-succinyllysine mark. Phosphoserine is present on Ser-62.

This sequence belongs to the eukaryotic ribosomal protein eL32 family. In terms of assembly, component of the large ribosomal subunit.

It is found in the cytoplasm. Functionally, component of the large ribosomal subunit. The ribosome is a large ribonucleoprotein complex responsible for the synthesis of proteins in the cell. The polypeptide is Large ribosomal subunit protein eL32 (RPL32) (Macaca fascicularis (Crab-eating macaque)).